A 132-amino-acid polypeptide reads, in one-letter code: MAFDGAWKIDRNENYDKFMEKMGINVVKRKLAAHDNLKLIITQEGNKFTVKESSTFRNIEIVFELGVTFNYSLADGTELTGNWNLEGNKLVGKFQRVDNGKELNTVREIIGDEMVQTYVYEGVEAKRIFKKN.

Alanine 2 is modified (N-acetylalanine). The hexadecanoate site is built by tryptophan 83 and arginine 107. Tryptophan 83 and arginine 107 together coordinate tetradecanoate.

Belongs to the calycin superfamily. Fatty-acid binding protein (FABP) family.

It localises to the cytoplasm. Its function is as follows. FABPs are thought to play a role in the intracellular transport of long-chain fatty acids and their acyl-CoA esters. FABP2 is probably involved in triglyceride-rich lipoprotein synthesis. Binds saturated long-chain fatty acids with a high affinity, but binds with a lower affinity to unsaturated long-chain fatty acids. FABP2 may also help maintain energy homeostasis by functioning as a lipid sensor. The polypeptide is Fatty acid-binding protein, intestinal (FABP2) (Sus scrofa (Pig)).